Consider the following 215-residue polypeptide: Leucyl/phenylalanyl-tRNA--protein transferase (215 aa).

The protein belongs to the L/F-transferase family.

It is found in the cytoplasm. It carries out the reaction N-terminal L-lysyl-[protein] + L-leucyl-tRNA(Leu) = N-terminal L-leucyl-L-lysyl-[protein] + tRNA(Leu) + H(+). The catalysed reaction is N-terminal L-arginyl-[protein] + L-leucyl-tRNA(Leu) = N-terminal L-leucyl-L-arginyl-[protein] + tRNA(Leu) + H(+). The enzyme catalyses L-phenylalanyl-tRNA(Phe) + an N-terminal L-alpha-aminoacyl-[protein] = an N-terminal L-phenylalanyl-L-alpha-aminoacyl-[protein] + tRNA(Phe). In terms of biological role, functions in the N-end rule pathway of protein degradation where it conjugates Leu, Phe and, less efficiently, Met from aminoacyl-tRNAs to the N-termini of proteins containing an N-terminal arginine or lysine. This is Leucyl/phenylalanyl-tRNA--protein transferase from Campylobacter jejuni (strain RM1221).